The sequence spans 192 residues: Thymidine kinase (192 aa).

Residues 9–16 (SAMNAGKS) and 87–90 (DECQ) each bind ATP. Glu88 (proton acceptor) is an active-site residue. Residues Cys145, Cys147, Cys182, and His185 each contribute to the Zn(2+) site.

Belongs to the thymidine kinase family. Homotetramer.

The protein localises to the cytoplasm. The enzyme catalyses thymidine + ATP = dTMP + ADP + H(+). This chain is Thymidine kinase, found in Vibrio cholerae serotype O1 (strain ATCC 39315 / El Tor Inaba N16961).